We begin with the raw amino-acid sequence, 312 residues long: Ribosomal protein L11 methyltransferase (312 aa).

Residues Thr-160, Gly-181, Asp-203, and Asn-246 each contribute to the S-adenosyl-L-methionine site.

This sequence belongs to the methyltransferase superfamily. PrmA family.

It is found in the cytoplasm. The enzyme catalyses L-lysyl-[protein] + 3 S-adenosyl-L-methionine = N(6),N(6),N(6)-trimethyl-L-lysyl-[protein] + 3 S-adenosyl-L-homocysteine + 3 H(+). Methylates ribosomal protein L11. This chain is Ribosomal protein L11 methyltransferase, found in Staphylococcus aureus (strain COL).